Consider the following 105-residue polypeptide: Resistin-like beta (105 aa).

Positions 1 to 23 (MKPTLCFLFILVSLFPLIVPGNA) are cleaved as a signal peptide. Cystine bridges form between C49–C102, C61–C101, C70–C87, C72–C89, and C76–C91.

Belongs to the resistin/FIZZ family. In terms of assembly, homodimer; disulfide-linked. Heterodimer with RETNLG. As to expression, strongly expressed in colon, and at lower levels in ileum. In colon, found throughout the crypt and surface epithelium and in goblet cells (at protein level). Specific to the gastrointestinal tract; not detected in other tissues tested.

Its subcellular location is the secreted. Functionally, probable hormone. The chain is Resistin-like beta (Retnlb) from Mus musculus (Mouse).